Reading from the N-terminus, the 467-residue chain is Dihydrolipoyl dehydrogenase 3 (467 aa).

Residues 34–43, K52, and A116 each bind FAD; that span reads EGRETLGGTC. A disulfide bridge links C43 with C48. NAD(+) is bound by residues 182–186, E205, V239, and 272–275; these read GAGVI and AIGR. Residues D314 and A322 each coordinate FAD. Residue H446 is the Proton acceptor of the active site.

The protein belongs to the class-I pyridine nucleotide-disulfide oxidoreductase family. In terms of assembly, homodimer. FAD serves as cofactor.

The protein localises to the cytoplasm. It carries out the reaction N(6)-[(R)-dihydrolipoyl]-L-lysyl-[protein] + NAD(+) = N(6)-[(R)-lipoyl]-L-lysyl-[protein] + NADH + H(+). Its function is as follows. LPD-3 may substitute for lipoamide dehydrogenase of the 2-oxoglutarate dehydrogenase and pyruvate multienzyme complexes when the latter is inactive or missing. In Pseudomonas aeruginosa (strain ATCC 15692 / DSM 22644 / CIP 104116 / JCM 14847 / LMG 12228 / 1C / PRS 101 / PAO1), this protein is Dihydrolipoyl dehydrogenase 3 (lpd3).